A 155-amino-acid chain; its full sequence is Small ribosomal subunit protein uS7c (155 aa).

This sequence belongs to the universal ribosomal protein uS7 family. Part of the 30S ribosomal subunit.

The protein localises to the plastid. The protein resides in the chloroplast. One of the primary rRNA binding proteins, it binds directly to 16S rRNA where it nucleates assembly of the head domain of the 30S subunit. The sequence is that of Small ribosomal subunit protein uS7c (rps7) from Yucca glauca (Soapweed yucca).